The primary structure comprises 1116 residues: Phosphatidylinositol 4-kinase beta 2 (1116 aa).

The PIK helical domain maps to 1–143 (MQMAQFLSLV…SRIQEKCQIA (143 aa)). 8 tandem repeats follow at residues 210-229 (ADDN…RDAL), 242-261 (CEKD…EDDE), 264-283 (SNSE…EEEE), 286-304 (NNSE…DEEE), 307-326 (SSSD…DEEE), 329-348 (ANSE…EDEE), 351-370 (ANTE…EDDK), and 378-396 (EEKD…DEKR). An 11 X 20 AA approximate repeats (PPC) region spans residues 210–507 (ADDNKIFKRL…FRDRDRSVED (298 aa)). Residues 394–404 (EKRNGNERNET) are compositionally biased toward basic and acidic residues. The interval 394–417 (EKRNGNERNETDETVYTDETSGED) is disordered. The span at 405–415 (DETVYTDETSG) shows a compositional bias: acidic residues. Copy 9 of the repeat occupies 418 to 436 (NGREGFFKKLFKEKFEDKP). Phosphoserine is present on residues S447 and S452. 2 consecutive repeat copies span residues 452–470 (SSEF…EDVK) and 488–507 (PGTE…SVED). Disordered stretches follow at residues 515 to 540 (KYKE…LPNN) and 794 to 813 (GEAP…SDAQ). A PI3K/PI4K catalytic domain is found at 830–1101 (EFWEGKRLRI…LISSSLDAWR (272 aa)). Residues 836–842 (RLRIRKD) are G-loop. The interval 964 to 972 (QIKDRHNGN) is catalytic loop. The activation loop stretch occupies residues 983 to 1007 (HIDFGFMLSNSPGGVNFESAPFKLT).

The protein belongs to the PI3/PI4-kinase family. Type III PI4K subfamily.

It localises to the cell membrane. It is found in the golgi apparatus. The protein localises to the trans-Golgi network. The protein resides in the cytoplasmic vesicle membrane. The catalysed reaction is a 1,2-diacyl-sn-glycero-3-phospho-(1D-myo-inositol) + ATP = a 1,2-diacyl-sn-glycero-3-phospho-(1D-myo-inositol 4-phosphate) + ADP + H(+). Acts on phosphatidylinositol (PtdIns) in the first committed step in the production of the second messenger inositol-1,4,5-trisphosphate. Necessary for proper organization of the trans-Golgi network (TGN) and post-Golgi secretion in root hairs. Together with PI4KB1, required during polarized root hair expansion and pollen tube elongation. Functions redundantly with PI4KB1 upstream of the cold response phosphoinositide-dependent phospholipase C (PI-PLC) pathway. This is Phosphatidylinositol 4-kinase beta 2 (PI4KB2) from Arabidopsis thaliana (Mouse-ear cress).